Reading from the N-terminus, the 766-residue chain is Tetratricopeptide repeat protein 14 (766 aa).

Residues 35 to 55 (LGTAAEPARGAAPPPGAGRKE) are disordered. The 83-residue stretch at 125–207 (GDIVIGRISS…YHEKLAVSLY (83 aa)) folds into the S1 motif domain. TPR repeat units follow at residues 209–242 (SSLP…NSNS), 306–339 (ALKC…DKQN), 341–373 (EALV…CPTH), and 381–414 (CQTL…DETF). Residues 463–743 (EEKRLKKKRR…PDSRVKKNLP (281 aa)) form a disordered region. Residues 475–496 (SSSSSVSSADESVSSSSSSSSS) are compositionally biased toward low complexity. Residues 497-506 (SHKRHKKSKR) are compositionally biased toward basic residues. Polar residues predominate over residues 539 to 550 (PTNTSASFLNQK). Positions 551–562 (QEVEKLLEKQDR) are enriched in basic and acidic residues. The span at 594-605 (FYNSYKTQAGSS) shows a compositional bias: polar residues. 2 stretches are compositionally biased toward basic and acidic residues: residues 606–616 (KTEKPYKSERH) and 629–657 (NSED…RRWE). Positions 661-673 (VKYSTSPASSDYS) are enriched in polar residues. Position 666 is a phosphoserine (Ser-666). A compositionally biased stretch (basic and acidic residues) spans 707–738 (RVYEKEDSCGEGNRNEAPEEMLNSKEQPDSRV).

The protein belongs to the TTC14 family.

This is Tetratricopeptide repeat protein 14 from Mus musculus (Mouse).